We begin with the raw amino-acid sequence, 548 residues long: Membrane-associated tyrosine- and threonine-specific cdc2-inhibitory kinase (548 aa).

A disordered region spans residues 61-89 (PNKQRSWSQPRPQSVSFRSPQNKTPASKL). Over residues 63 to 85 (KQRSWSQPRPQSVSFRSPQNKTP) the composition is skewed to polar residues. One can recognise a Protein kinase domain in the interval 103 to 353 (FKSICKLGRG…VDWLLSLPAI (251 aa)). ATP is bound by residues 109-117 (LGRGSFGEV) and Lys-132. Catalysis depends on Asp-226, which acts as the Proton acceptor. The Mg(2+) site is built by Asn-231, Asp-244, and Gly-246. Positions 376-392 (VYQFIVWLLSFVFQWLN) match the Membrane-association motif motif. Residues 464–523 (SPDLLSRPSLGSTSTPRNLSPEFSMRKRSALPLTPNVSRISQDSTGKSRSPSTSHSSSGF) are disordered. Over residues 472–481 (SLGSTSTPRN) the composition is skewed to polar residues. At Thr-478 the chain carries Phosphothreonine; by CDK1. A compositionally biased stretch (low complexity) spans 507–521 (STGKSRSPSTSHSSS).

It belongs to the protein kinase superfamily. Ser/Thr protein kinase family. WEE1 subfamily. In terms of assembly, interacts with CDC2-CCNB1 complex. Interacts with Mos during oocyte maturation. In terms of processing, autophosphorylated. Phosphorylated on undefined residues by RSK2 and Mos kinases. Phosphorylation at Thr-478 by cdk1 creates a docking site for plk1/plx1, leading to subsequent phosphorylation by plk1/plk1 and inhibition of the protein kinase activity kinase activity.

The protein localises to the endoplasmic reticulum membrane. It is found in the golgi apparatus membrane. It catalyses the reaction L-seryl-[protein] + ATP = O-phospho-L-seryl-[protein] + ADP + H(+). The enzyme catalyses L-threonyl-[protein] + ATP = O-phospho-L-threonyl-[protein] + ADP + H(+). Its activity is regulated as follows. Negatively regulated by hyperphosphorylation during mitosis. The plk1/plk1 protein kinase may be required for mitotic phosphorylation. Inactivated during oocyte maturation by phosphorylation by RSK2 and Mos kinase. Functionally, acts as a negative regulator of entry into mitosis (G2 to M transition) by phosphorylation of the CDK1 kinase specifically when CDK1 is complexed to cyclins. Mediates phosphorylation of CDK1 predominantly on 'Thr-14'. Also involved in Golgi fragmentation. May be involved in phosphorylation of CDK1 on 'Tyr-15' to a lesser degree, however tyrosine kinase activity is unclear and may be indirect. The protein is Membrane-associated tyrosine- and threonine-specific cdc2-inhibitory kinase (pkmyt1) of Xenopus laevis (African clawed frog).